Here is a 787-residue protein sequence, read N- to C-terminus: MNKKSLSTLEFYKITDQLVSYACCDGAKKILRNLKPMTDITDINLRLNETNDALSRIFQKGTVDFSQTKDIRASVARLKVGSSLNISELLNISAILSCAKHVKDYYEHREDSISGMLENLATVDALNSQIKKCIISEDEISDDASSNLRSIRRSKSIANDRIHSELNKLLNSPTYRTYLQDYVITTRQGRYCLPVKAEYKSAFPGMIHDQSSTGSTLFIEPAAVVKLNNDIRELELKEAAEIEVILADLSAKAGEHTEELLCDYEILVELDCIFAKAQLARHMHASRPVMNTSGIINIKKGRHPLIESHTVVPIDIYLGTDFKLLIITGPNTGGKTVSLKTVGLLTLMAQSGLFIPALDHSDIAVFKNIYADIGDEQSIEQSLSTFSSHMTNTVKILKEADENCLVLFDEIGAGTDPTEGAALAIAILNDLKMRGVTTMATTHYSEIKLYALSTEGVENASCEFDVESLRPTYRLLIGIPGKSNAFAISKKLGLPDYILSDASERLNAEDVHFEDIVSDLEHARISLEKEQAEVESYKAEIASLKEKLQAKNERLDERTDNIIRKANEQAAAILKDAKDFADETIKAMNKHGMTVAELEKHRTAVREKMNKNQAKLKVEPAKVKAHKAHDISEFKTGMHVKVLTMNVSGTVSAIHPAKKQVTVQVGALSTKIDIKNLEILSDYKEPKEAPSKAAGGSGKIKMSKSAGISTEINLLGCTVDEAVARLDKYLDDAYIARIPQVRIVHGKGTGALRNGVTAYLRGVPYIKSFRLGEIGEGDAGVTIVDFK.

329-336 provides a ligand contact to ATP; sequence GPNTGGKT. Residues 712–787 form the Smr domain; sequence INLLGCTVDE…DAGVTIVDFK (76 aa).

This sequence belongs to the DNA mismatch repair MutS family. MutS2 subfamily. As to quaternary structure, homodimer. Binds to stalled ribosomes, contacting rRNA.

Functionally, endonuclease that is involved in the suppression of homologous recombination and thus may have a key role in the control of bacterial genetic diversity. Acts as a ribosome collision sensor, splitting the ribosome into its 2 subunits. Detects stalled/collided 70S ribosomes which it binds and splits by an ATP-hydrolysis driven conformational change. Acts upstream of the ribosome quality control system (RQC), a ribosome-associated complex that mediates the extraction of incompletely synthesized nascent chains from stalled ribosomes and their subsequent degradation. Probably generates substrates for RQC. This Lachnospira eligens (strain ATCC 27750 / DSM 3376 / VPI C15-48 / C15-B4) (Eubacterium eligens) protein is Endonuclease MutS2.